The primary structure comprises 311 residues: Porphobilinogen deaminase (311 aa).

The residue at position 241 (Cys-241) is an S-(dipyrrolylmethanemethyl)cysteine.

Belongs to the HMBS family. As to quaternary structure, monomer. It depends on dipyrromethane as a cofactor.

It catalyses the reaction 4 porphobilinogen + H2O = hydroxymethylbilane + 4 NH4(+). Its pathway is porphyrin-containing compound metabolism; protoporphyrin-IX biosynthesis; coproporphyrinogen-III from 5-aminolevulinate: step 2/4. Tetrapolymerization of the monopyrrole PBG into the hydroxymethylbilane pre-uroporphyrinogen in several discrete steps. This Campylobacter curvus (strain 525.92) protein is Porphobilinogen deaminase.